The sequence spans 531 residues: Probable cytochrome P450 4e1 (531 aa).

Residues Glu-307 and Cys-444 each contribute to the heme site.

Belongs to the cytochrome P450 family. Heme is required as a cofactor.

It localises to the endoplasmic reticulum membrane. The protein resides in the microsome membrane. Its function is as follows. May be involved in the metabolism of insect hormones and in the breakdown of synthetic insecticides. The polypeptide is Probable cytochrome P450 4e1 (Cyp4e1) (Drosophila melanogaster (Fruit fly)).